A 232-amino-acid polypeptide reads, in one-letter code: Ornithine carbamoyltransferase (232 aa).

Carbamoyl phosphate is bound by residues Gln-15, Arg-39, and 66–69 (HPTQ). L-ornithine-binding positions include Asn-99, Asp-163, and 167 to 168 (SM). Carbamoyl phosphate-binding positions include 204–207 (HCLP) and Thr-232.

Belongs to the aspartate/ornithine carbamoyltransferase superfamily. OTCase family.

The protein resides in the cytoplasm. It carries out the reaction carbamoyl phosphate + L-ornithine = L-citrulline + phosphate + H(+). It participates in amino-acid biosynthesis; L-arginine biosynthesis; L-arginine from L-ornithine and carbamoyl phosphate: step 1/3. The polypeptide is Ornithine carbamoyltransferase (argF) (Neisseria animalis).